The chain runs to 190 residues: Homeobox protein SEBOX (190 aa).

The segment covering 1–11 (MPSPVDASSAD) has biased composition (low complexity). 2 disordered regions span residues 1–24 (MPSPVDASSADGGSGLGSHRRKRT) and 82–161 (ILSP…VHPS). The homeobox DNA-binding region spans 19-78 (HRRKRTTFSKGQLLELERAFAAWPYPNISTHEHLAWVTCLPEAKVQVWFQKRWAKIIKNR). Over residues 89–100 (CPQSSCSLPDTL) the composition is skewed to polar residues.

The protein belongs to the paired homeobox family.

The protein localises to the nucleus. In terms of biological role, probable transcription factor involved in the control of specification of mesoderm and endoderm. The chain is Homeobox protein SEBOX (SEBOX) from Homo sapiens (Human).